A 539-amino-acid chain; its full sequence is Envelope glycoprotein E (539 aa).

Positions 1 to 24 (MRPPVRASLGLLVAWAIGACVCAA) are cleaved as a signal peptide. The Virion surface portion of the chain corresponds to 25-410 (AIETTWKHAS…RPAAPRAARL (386 aa)). The interaction with gI stretch occupies residues 66–91 (CGSLRPSWVSLRPPGQVLDTVVDAEC). The tract at residues 168–203 (APRRPEPAGGTPPPRDDEEGGTEEPATPAPPPHPHP) is disordered. 3 cysteine pairs are disulfide-bonded: Cys-262–Cys-288, Cys-271–Cys-280, and Cys-305–Cys-314. The disordered stretch occupies residues 378 to 404 (ERSPPRYRPPPVEPTPSAQPTGPRPAA). Residues 411–431 (VGVLGAAVGLAVAGLSVWACV) form a helical membrane-spanning segment. Topologically, residues 432-539 (TCRRARAWRA…PSSPDPPHRR (108 aa)) are intravirion. The Internalization motif motif lies at 452–455 (YIRL). Disordered regions lie at residues 466–497 (SYGD…GFQI) and 517–539 (ITFR…PHRR). The tract at residues 468-480 (GDSDDSEYDSDSD) is acidic. The span at 520–531 (RADDTSRYRDPS) shows a compositional bias: basic and acidic residues.

This sequence belongs to the alphaherpesvirinae glycoprotein E family. As to quaternary structure, interacts with gI. In terms of processing, phosphorylated on serines within the acidic cluster. Phosphorylation determines whether endocytosed viral gE traffics to the trans-Golgi network or recycles to the cell membrane.

The protein localises to the virion membrane. It is found in the host cell membrane. Its subcellular location is the host cell junction. The protein resides in the host Golgi apparatus membrane. It localises to the host endosome membrane. Its function is as follows. In epithelial cells, the heterodimer gE/gI is required for the cell-to-cell spread of the virus, by sorting nascent virions to cell junctions. Once the virus reaches the cell junctions, virus particles can spread to adjacent cells extremely rapidly through interactions with cellular receptors that accumulate at these junctions. Implicated in basolateral spread in polarized cells. In neuronal cells, gE/gI is essential for the anterograde spread of the infection throughout the host nervous system. Together with US9, the heterodimer gE/gI is involved in the sorting and transport of viral structural components toward axon tips. The protein is Envelope glycoprotein E (gE) of Macaca fascicularis (Crab-eating macaque).